The following is a 150-amino-acid chain: Large ribosomal subunit protein bL9 (150 aa).

It belongs to the bacterial ribosomal protein bL9 family.

In terms of biological role, binds to the 23S rRNA. This Mycoplasmopsis pulmonis (strain UAB CTIP) (Mycoplasma pulmonis) protein is Large ribosomal subunit protein bL9.